The primary structure comprises 356 residues: UDP-N-acetylglucosamine--N-acetylmuramyl-(pentapeptide) pyrophosphoryl-undecaprenol N-acetylglucosamine transferase (356 aa).

UDP-N-acetyl-alpha-D-glucosamine is bound by residues 12–14 (TAG), arginine 166, serine 196, and glutamine 291.

Belongs to the glycosyltransferase 28 family. MurG subfamily.

The protein resides in the cell membrane. It catalyses the reaction di-trans,octa-cis-undecaprenyl diphospho-N-acetyl-alpha-D-muramoyl-L-alanyl-D-glutamyl-meso-2,6-diaminopimeloyl-D-alanyl-D-alanine + UDP-N-acetyl-alpha-D-glucosamine = di-trans,octa-cis-undecaprenyl diphospho-[N-acetyl-alpha-D-glucosaminyl-(1-&gt;4)]-N-acetyl-alpha-D-muramoyl-L-alanyl-D-glutamyl-meso-2,6-diaminopimeloyl-D-alanyl-D-alanine + UDP + H(+). The protein operates within cell wall biogenesis; peptidoglycan biosynthesis. Functionally, cell wall formation. Catalyzes the transfer of a GlcNAc subunit on undecaprenyl-pyrophosphoryl-MurNAc-pentapeptide (lipid intermediate I) to form undecaprenyl-pyrophosphoryl-MurNAc-(pentapeptide)GlcNAc (lipid intermediate II). The sequence is that of UDP-N-acetylglucosamine--N-acetylmuramyl-(pentapeptide) pyrophosphoryl-undecaprenol N-acetylglucosamine transferase from Geobacillus thermodenitrificans (strain NG80-2).